Reading from the N-terminus, the 330-residue chain is MSHAGAIAALGVALIAAALFSAIHKIEEGHVGVYYRGGALLTTTSGPGFHLMLPFITSFKSVQSTLQTDEVKNVPCGTSGGVMIYFDRIEVVNYLISSAVYDIVKNYTADYDKALIFNKIHHELNQFCSVHNLQEVYIELFDQIDEDLKLALQKDLNLMAPGIIIQAVRVTKPNIPEAIRRNYELMESEKTKLLIAAQKQKVVEKEAETERKKAIIEAEKVAQVAQIKYGQKVMEKETEKKISEIEDFAFLAREKARADAEYYTAQKAAEANKLKLTPEYLQLMKYQAIAANSKIYFGQDIPNMFMDSSSAGPRVQSAKRNEPAAAEELK.

Topologically, residues 1–2 are cytoplasmic; it reads MS. Residues 3 to 23 form a helical membrane-spanning segment; it reads HAGAIAALGVALIAAALFSAI. The Lumenal segment spans residues 24–330; it reads HKIEEGHVGV…NEPAAAEELK (307 aa). The N-linked (GlcNAc...) asparagine glycan is linked to Asn-106. Positions 308–330 are disordered; sequence SSSAGPRVQSAKRNEPAAAEELK. Residues 319–330 show a composition bias toward basic and acidic residues; it reads KRNEPAAAEELK.

This sequence belongs to the band 7/mec-2 family.

The protein localises to the endoplasmic reticulum membrane. In terms of biological role, mediates the endoplasmic reticulum-associated degradation (ERAD) of inositol 1,4,5-trisphosphate receptors (IP3Rs). Promotes sterol-accelerated ERAD of HMGCR. Involved in regulation of cellular cholesterol homeostasis by regulation the SREBP signaling pathway. This is Erlin-2-B (erlin2-b) from Xenopus laevis (African clawed frog).